A 234-amino-acid polypeptide reads, in one-letter code: Uridylate kinase (234 aa).

ATP is bound at residue 9–12 (KLSG). Residue glycine 51 participates in UMP binding. ATP is bound by residues glycine 52 and arginine 56. UMP-binding positions include aspartate 71 and 132 to 139 (CGNPFFTT). 3 residues coordinate ATP: threonine 159, tyrosine 165, and aspartate 168.

This sequence belongs to the UMP kinase family. Homohexamer.

It is found in the cytoplasm. It carries out the reaction UMP + ATP = UDP + ADP. It participates in pyrimidine metabolism; CTP biosynthesis via de novo pathway; UDP from UMP (UMPK route): step 1/1. Its activity is regulated as follows. Inhibited by UTP. In terms of biological role, catalyzes the reversible phosphorylation of UMP to UDP. This Prochlorococcus marinus (strain MIT 9312) protein is Uridylate kinase.